Reading from the N-terminus, the 142-residue chain is Large ribosomal subunit protein uL11 (142 aa).

It belongs to the universal ribosomal protein uL11 family. Part of the ribosomal stalk of the 50S ribosomal subunit. Interacts with L10 and the large rRNA to form the base of the stalk. L10 forms an elongated spine to which L12 dimers bind in a sequential fashion forming a multimeric L10(L12)X complex. In terms of processing, one or more lysine residues are methylated.

Functionally, forms part of the ribosomal stalk which helps the ribosome interact with GTP-bound translation factors. This Cronobacter sakazakii (strain ATCC BAA-894) (Enterobacter sakazakii) protein is Large ribosomal subunit protein uL11.